Here is a 157-residue protein sequence, read N- to C-terminus: SsrA-binding protein (157 aa).

This sequence belongs to the SmpB family.

It is found in the cytoplasm. Functionally, required for rescue of stalled ribosomes mediated by trans-translation. Binds to transfer-messenger RNA (tmRNA), required for stable association of tmRNA with ribosomes. tmRNA and SmpB together mimic tRNA shape, replacing the anticodon stem-loop with SmpB. tmRNA is encoded by the ssrA gene; the 2 termini fold to resemble tRNA(Ala) and it encodes a 'tag peptide', a short internal open reading frame. During trans-translation Ala-aminoacylated tmRNA acts like a tRNA, entering the A-site of stalled ribosomes, displacing the stalled mRNA. The ribosome then switches to translate the ORF on the tmRNA; the nascent peptide is terminated with the 'tag peptide' encoded by the tmRNA and targeted for degradation. The ribosome is freed to recommence translation, which seems to be the essential function of trans-translation. The protein is SsrA-binding protein of Clostridium kluyveri (strain NBRC 12016).